Here is a 356-residue protein sequence, read N- to C-terminus: MNNLKKNDKEVLEEFANLFPILLNEIKKELEKIDFPKESIHWIETVIKANSTGGKMNRGISVLESLESLNEGRALTRHEIFQAQTLGWCVEIFQACYLVSDDIMDQSLKRRGKPCWYKQKRPNSDQEVGLAAINDSFIIESCVFILLEKYFKNESYYLNIVELFHKTGFQTQLGQLLDLTTQPIRGDFSSINLKNHTRITEYKTAYYSFFFPVALAMLMSKINHEQAFTTAKDILLPMGVYFQVQDDFLDCYGSPEVFGKIGRDIEENKCSWMICQAILNGTPDQINLLKKHYGFDNPTDVEIVKKIYKEINLEKIFKDYENTSYNFLIDKIKTTCIYLPPSVFLKILSKIYKRDK.

Residues lysine 55, arginine 58, and glutamine 94 each contribute to the isopentenyl diphosphate site. 2 residues coordinate Mg(2+): aspartate 101 and aspartate 105. Dimethylallyl diphosphate is bound at residue arginine 110. Arginine 111 serves as a coordination point for isopentenyl diphosphate. Dimethylallyl diphosphate-binding residues include lysine 203, threonine 204, glutamine 243, lysine 260, and lysine 269.

This sequence belongs to the FPP/GGPP synthase family. Mg(2+) serves as cofactor.

It localises to the cytoplasm. It carries out the reaction isopentenyl diphosphate + dimethylallyl diphosphate = (2E)-geranyl diphosphate + diphosphate. The catalysed reaction is isopentenyl diphosphate + (2E)-geranyl diphosphate = (2E,6E)-farnesyl diphosphate + diphosphate. Its pathway is isoprenoid biosynthesis; farnesyl diphosphate biosynthesis; farnesyl diphosphate from geranyl diphosphate and isopentenyl diphosphate: step 1/1. The protein operates within isoprenoid biosynthesis; geranyl diphosphate biosynthesis; geranyl diphosphate from dimethylallyl diphosphate and isopentenyl diphosphate: step 1/1. Inhibited by aminobisphosphonate drugs (aBP), such as risedronate and alendronate. In terms of biological role, key enzyme in isoprenoid biosynthesis which catalyzes the formation of farnesyl diphosphate (FPP), a sterol precursor. The protein is Probable farnesyl diphosphate synthase DDB_G0278823 of Dictyostelium discoideum (Social amoeba).